The chain runs to 780 residues: Protein phosphatase 1 regulatory subunit 21 (780 aa).

Coiled-coil stretches lie at residues 1-207 and 556-607; these read MASA…LKTL and ESRE…LKNT. The segment at 84 to 104 is disordered; the sequence is EPRGKKNKKSGESSSQLSQEQ. The span at 95-104 shows a compositional bias: low complexity; the sequence is ESSSQLSQEQ. Phosphothreonine is present on threonine 652. Residues 693–742 adopt a coiled-coil conformation; the sequence is YAECRALSKRLALAEKSKEALTEEMKLASQNISRLQDELTTTKRSYEDQL. The segment at 760 to 780 is disordered; that stretch reads REEIDTLKMSSKGNSKKNKSR.

As to quaternary structure, component of the FERRY complex, composed of five subunits: TBCK, PPP1R21, FERRY3, CRYZL1 and GATAD1, with a ratio of 1:2:1:2:4 respectively. PPP1R21 serves as a binding hub connecting all five complex subunits to mediate the binding to specific mitochondrial mRNAs. Interacts with the GTP-bound form of RAB5A (via its C-terminal region); linking the mRNP complex onto trafficking endosomes for active mRNA transport. Interacts with PPP1CA.

It localises to the early endosome. Component of the FERRY complex (Five-subunit Endosomal Rab5 and RNA/ribosome intermediary). The FERRY complex directly interacts with mRNAs and RAB5A, and functions as a RAB5A effector involved in the localization and the distribution of specific mRNAs most likely by mediating their endosomal transport. The complex recruits mRNAs and ribosomes to early endosomes through direct mRNA-interaction. In the complex, PPP1R21 serves as a binding hub connecting all five complex subunits and mediating the binding to mRNA and early endosomes via RAB5A. Putative regulator of protein phosphatase 1 (PP1) activity. May play a role in the endosomal sorting process or in endosome maturation pathway. The chain is Protein phosphatase 1 regulatory subunit 21 (PPP1R21) from Homo sapiens (Human).